Here is a 495-residue protein sequence, read N- to C-terminus: Formin-like protein 17 (495 aa).

A disordered region spans residues Met-1 to Arg-92. A compositionally biased stretch (pro residues) spans Gly-19–Leu-29. The span at Gln-30–Ser-39 shows a compositional bias: low complexity. The FH2 domain maps to Lys-86 to Lys-486.

This sequence belongs to the formin-like family. Class-II subfamily.

This Arabidopsis thaliana (Mouse-ear cress) protein is Formin-like protein 17 (FH17).